The chain runs to 185 residues: Dehydrin ERD14 (185 aa).

Composition is skewed to basic and acidic residues over residues 1-13, 25-45, 52-78, and 103-134; these read MAEE…EQEV, VTDR…KPEE, FEQK…HRSD, and KPTT…KPED. Disordered regions lie at residues 1–138 and 166–185; these read MAEE…GSAV and EKLP…KDKE. N-acetylalanine is present on Ala-2. Position 59 is a phosphoserine (Ser-59). Tandem repeats lie at residues 112-132 and 154-174. Residues 112–174 are 2 X 21 AA repeats, Lys-rich; that stretch reads EEEKKGFMEK…KEKLPGYHPK (63 aa).

Belongs to the plant dehydrin family. In stems, cauline leaves, roots and flowers. Low levels found in maturing seeds. Absent in dry seeds.

Intrinsically disordered protein acting as a chaperone. Prevents heat-induced aggregation and/or inactivation of various substrates. Binds to acidic phospholipid vesicles without affecting membrane fluidity. This is Dehydrin ERD14 (ERD14) from Arabidopsis thaliana (Mouse-ear cress).